Reading from the N-terminus, the 60-residue chain is MKNQNEKQIKEYVNKFKDLRNQLTKNNDVKKVCDLINDLFFEVYKNNLIDEVIKEINKHD.

This is an uncharacterized protein from Ureaplasma parvum serovar 3 (strain ATCC 700970).